The following is a 339-amino-acid chain: Glycerol-3-phosphate dehydrogenase [NAD(P)+] (339 aa).

Residues serine 13, tryptophan 14, and lysine 108 each coordinate NADPH. Residues lysine 108, glycine 139, and serine 141 each contribute to the sn-glycerol 3-phosphate site. Alanine 143 serves as a coordination point for NADPH. Sn-glycerol 3-phosphate is bound by residues lysine 194, aspartate 247, serine 257, arginine 258, and asparagine 259. Lysine 194 acts as the Proton acceptor in catalysis. Arginine 258 is an NADPH binding site. Residues valine 282 and glutamate 284 each coordinate NADPH.

The protein belongs to the NAD-dependent glycerol-3-phosphate dehydrogenase family.

It is found in the cytoplasm. It carries out the reaction sn-glycerol 3-phosphate + NAD(+) = dihydroxyacetone phosphate + NADH + H(+). The catalysed reaction is sn-glycerol 3-phosphate + NADP(+) = dihydroxyacetone phosphate + NADPH + H(+). It functions in the pathway membrane lipid metabolism; glycerophospholipid metabolism. Catalyzes the reduction of the glycolytic intermediate dihydroxyacetone phosphate (DHAP) to sn-glycerol 3-phosphate (G3P), the key precursor for phospholipid synthesis. The polypeptide is Glycerol-3-phosphate dehydrogenase [NAD(P)+] (Streptococcus equi subsp. equi (strain 4047)).